The primary structure comprises 653 residues: ATP-dependent zinc metalloprotease FtsH 1 (653 aa).

Residues 1-7 lie on the Cytoplasmic side of the membrane; it reads MSRFFKS. Residues 8 to 28 traverse the membrane as a helical segment; that stretch reads AAFPILIVVVLAFFAQRLINP. The Extracellular portion of the chain corresponds to 29–105; sequence GDSGPRYDYS…FDIEGTKSNG (77 aa). Residues 106-126 traverse the membrane as a helical segment; the sequence is WLSLLTYVLPFLIFIGFWIFL. Residues 127-653 are Cytoplasmic-facing; it reads MNQVQGGGSK…MHFPERPELA (527 aa). 198-205 contributes to the ATP binding site; the sequence is GPPGTGKT. Residue His420 coordinates Zn(2+). Glu421 is an active-site residue. Zn(2+) is bound by residues His424 and Asp496. Residues 603-653 form a disordered region; the sequence is EEVFGAEASPPPDVPLPPATERGRDTPRPLPRPGLAGGAAEMHFPERPELA. The segment covering 611–620 has biased composition (pro residues); the sequence is SPPPDVPLPP.

It in the central section; belongs to the AAA ATPase family. This sequence in the C-terminal section; belongs to the peptidase M41 family. As to quaternary structure, homohexamer. It depends on Zn(2+) as a cofactor.

The protein resides in the cell membrane. Functionally, acts as a processive, ATP-dependent zinc metallopeptidase for both cytoplasmic and membrane proteins. Plays a role in the quality control of integral membrane proteins. The polypeptide is ATP-dependent zinc metalloprotease FtsH 1 (Conexibacter woesei (strain DSM 14684 / CCUG 47730 / CIP 108061 / JCM 11494 / NBRC 100937 / ID131577)).